We begin with the raw amino-acid sequence, 196 residues long: Late protein I196L (196 aa).

2 tandem repeats follow at residues 28 to 48 and 49 to 68. A 3; approximate repeat occupies 69–87; sequence ITTAISNNITDKDDYTHFS.

This sequence belongs to the asfivirus I196L family.

The sequence is that of Late protein I196L from Ornithodoros (relapsing fever ticks).